A 216-amino-acid polypeptide reads, in one-letter code: Nucleoside triphosphate pyrophosphatase (216 aa).

The active-site Proton acceptor is the Asp-86.

This sequence belongs to the Maf family. Requires a divalent metal cation as cofactor.

It localises to the cytoplasm. The catalysed reaction is a ribonucleoside 5'-triphosphate + H2O = a ribonucleoside 5'-phosphate + diphosphate + H(+). The enzyme catalyses a 2'-deoxyribonucleoside 5'-triphosphate + H2O = a 2'-deoxyribonucleoside 5'-phosphate + diphosphate + H(+). Functionally, nucleoside triphosphate pyrophosphatase. May have a dual role in cell division arrest and in preventing the incorporation of modified nucleotides into cellular nucleic acids. The sequence is that of Nucleoside triphosphate pyrophosphatase from Dictyostelium discoideum (Social amoeba).